The primary structure comprises 817 residues: Neurabin-2 (817 aa).

Disordered regions lie at residues 1 to 52 and 64 to 163; these read MMKT…KYGS and MGTT…GGDK. 2 actin-binding regions span residues 1-154 and 164-282; these read MMKT…FERS and EAVA…QHRV. Serine 15 is modified (phosphoserine; by MAPK1). Serine 17 bears the Phosphoserine; by CDK5 mark. Serine 94 bears the Phosphoserine; by PKA mark. Residues serine 100 and serine 116 each carry the phosphoserine modification. An interaction with D(2) dopamine receptor region spans residues 100-371; that stretch reads SLNENVDHSA…LERGVDNGRA (272 aa). Residues 131 to 141 are compositionally biased toward pro residues; that stretch reads SAQPAPPPHPP. The interval 169–255 is interaction with ADRA2A, ADRA2B and ADRA2C; sequence RLLRQERAGL…KRSRVFQPPP (87 aa). A Phosphoserine modification is found at serine 192. A Phosphothreonine modification is found at threonine 193. At serine 205 the chain carries Phosphoserine; by MAPK1. Threonine 207 carries the post-translational modification Phosphothreonine. The disordered stretch occupies residues 216 to 451; that stretch reads EKADSRTGLH…DPAPSRKIHF (236 aa). Positions 290–301 are enriched in basic and acidic residues; the sequence is KPREVRKIKPVE. Low complexity-rich tracts occupy residues 332 to 341 and 399 to 409; these read STPATTASPA and SGLGEDSGGSA. The segment covering 410–425 has biased composition (acidic residues); that stretch reads LEEDDEEDEEDGEPPY. The segment at 417 to 494 is interaction with protein phosphatase 1; the sequence is DEEDGEPPYE…LEKRVERLEL (78 aa). Position 438 is a phosphoserine (serine 438). Residues 447-451 carry the PP1-binding motif motif; that stretch reads RKIHF. Residues 480–525 are interaction with RGS2; sequence SAEYELEKRVERLELFPVELEKDSEGLGISIIGMGAGADMGLEKLG. The region spanning 496 to 584 is the PDZ domain; it reads PVELEKDSEG…RVRFMIGRER (89 aa). Positions 595–616 form a coiled coil; it reads IQQTLEQERWQREMMEQRYAQY. The interaction with TGN38 stretch occupies residues 595 to 816; that stretch reads IQQTLEQERW…NLQTLRNSNS (222 aa). Position 658 is a phosphoserine (serine 658). Positions 665-816 form a coiled coil; it reads EKLVHKFKEL…NLQTLRNSNS (152 aa).

As to quaternary structure, possibly exists as a homodimer, homotrimer or a homotetramer. Interacts with F-actin, PPP1CA, neurabin-1, TGN38 and D(2) dopamine receptor. Interacts with RGS1, RGS2, RGS4, RGS19 and ADRA1B, ADRA2A, ADRA2B, ADRA2C, CDKN2A, PPP1R2, RASGFR1 and TIAM1. Interacts (via C-terminus) with SPATA13 (via C-terminal tail). Interacts with DCLK2. Interacts with ADRA2B. In terms of processing, stimulation of D1 (but not D2) dopamine receptors induces Ser-94 phosphorylation. Dephosphorylation of Ser-94 is mediated mainly by PP1 and to a lesser extent by PP2A. Phosphorylation of spinophilin disrupts its association with F-actin, but does not affect its binding to PP1.

It localises to the cytoplasm. It is found in the cytoskeleton. Its subcellular location is the nucleus. The protein localises to the postsynaptic density. The protein resides in the cell junction. It localises to the adherens junction. It is found in the cell projection. Its subcellular location is the dendritic spine. The protein localises to the cell membrane. The protein resides in the lamellipodium. It localises to the filopodium. It is found in the ruffle membrane. Its function is as follows. Seems to act as a scaffold protein in multiple signaling pathways. Modulates excitatory synaptic transmission and dendritic spine morphology. Binds to actin filaments (F-actin) and shows cross-linking activity. Binds along the sides of the F-actin. May play an important role in linking the actin cytoskeleton to the plasma membrane at the synaptic junction. Believed to target protein phosphatase 1/PP1 to dendritic spines, which are rich in F-actin, and regulates its specificity toward ion channels and other substrates, such as AMPA-type and NMDA-type glutamate receptors. Plays a role in regulation of G-protein coupled receptor signaling, including dopamine D2 receptors and alpha-adrenergic receptors. May establish a signaling complex for dopaminergic neurotransmission through D2 receptors by linking receptors downstream signaling molecules and the actin cytoskeleton. Binds to ADRA1B and RGS2 and mediates regulation of ADRA1B signaling. May confer to Rac signaling specificity by binding to both, RacGEFs and Rac effector proteins. Probably regulates p70 S6 kinase activity by forming a complex with TIAM1. Required for hepatocyte growth factor (HGF)-induced cell migration. The protein is Neurabin-2 (Ppp1r9b) of Mus musculus (Mouse).